A 293-amino-acid polypeptide reads, in one-letter code: HTH-type transcriptional regulator ArgP (293 aa).

The HTH lysR-type domain maps to 4 to 60; the sequence is PDYRTLQALDAVIRERGFERAAQKLCITQSAVSQRIKQLENLFGQPLLVRTIPPHPT. The segment at residues 21–40 is a DNA-binding region (H-T-H motif); the sequence is FERAAQKLCITQSAVSQRIK.

Belongs to the LysR transcriptional regulatory family. As to quaternary structure, homodimer.

Controls the transcription of genes involved in arginine and lysine metabolism. The protein is HTH-type transcriptional regulator ArgP of Sodalis glossinidius (strain morsitans).